A 44-amino-acid chain; its full sequence is Thymosin beta (44 aa).

The disordered stretch occupies residues 1–44 (MSDKHDKPDISEVTKFDKSKLKKTETHEKNPLPTKETIDQEKQG). Position 2 is an N-acetylserine (Ser-2).

As to expression, expressed in regenerating axons.

It is found in the cytoplasm. The protein resides in the cytoskeleton. Its function is as follows. Plays an important role in the organization of the cytoskeleton. Binds to and sequesters actin monomers (G actin) and therefore inhibits actin polymerization. May be involved in the regulation of structural plasticity in the CNS. In Aplysia californica (California sea hare), this protein is Thymosin beta.